Reading from the N-terminus, the 736-residue chain is Meiotic expression up-regulated protein 27 (736 aa).

It belongs to the UPF0300 family.

This Schizosaccharomyces pombe (strain 972 / ATCC 24843) (Fission yeast) protein is Meiotic expression up-regulated protein 27 (meu27).